The primary structure comprises 97 residues: Large ribosomal subunit protein uL23 (97 aa).

This sequence belongs to the universal ribosomal protein uL23 family. In terms of assembly, part of the 50S ribosomal subunit. Contacts protein L29, and trigger factor when it is bound to the ribosome.

One of the early assembly proteins it binds 23S rRNA. One of the proteins that surrounds the polypeptide exit tunnel on the outside of the ribosome. Forms the main docking site for trigger factor binding to the ribosome. In Brucella anthropi (strain ATCC 49188 / DSM 6882 / CCUG 24695 / JCM 21032 / LMG 3331 / NBRC 15819 / NCTC 12168 / Alc 37) (Ochrobactrum anthropi), this protein is Large ribosomal subunit protein uL23.